A 156-amino-acid chain; its full sequence is ATP synthase subunit b (156 aa).

The helical transmembrane segment at 7-27 (LIGQLIAFAIFVAFCMKFVWP) threads the bilayer.

This sequence belongs to the ATPase B chain family. F-type ATPases have 2 components, F(1) - the catalytic core - and F(0) - the membrane proton channel. F(1) has five subunits: alpha(3), beta(3), gamma(1), delta(1), epsilon(1). F(0) has three main subunits: a(1), b(2) and c(10-14). The alpha and beta chains form an alternating ring which encloses part of the gamma chain. F(1) is attached to F(0) by a central stalk formed by the gamma and epsilon chains, while a peripheral stalk is formed by the delta and b chains.

The protein resides in the cell inner membrane. F(1)F(0) ATP synthase produces ATP from ADP in the presence of a proton or sodium gradient. F-type ATPases consist of two structural domains, F(1) containing the extramembraneous catalytic core and F(0) containing the membrane proton channel, linked together by a central stalk and a peripheral stalk. During catalysis, ATP synthesis in the catalytic domain of F(1) is coupled via a rotary mechanism of the central stalk subunits to proton translocation. Functionally, component of the F(0) channel, it forms part of the peripheral stalk, linking F(1) to F(0). The polypeptide is ATP synthase subunit b (Pasteurella multocida (strain Pm70)).